Here is a 548-residue protein sequence, read N- to C-terminus: Chaperonin GroEL (548 aa).

ATP-binding positions include 30-33 (TLGP), K51, 87-91 (DGTTT), G415, and D495.

It belongs to the chaperonin (HSP60) family. In terms of assembly, forms a cylinder of 14 subunits composed of two heptameric rings stacked back-to-back. Interacts with the co-chaperonin GroES.

The protein resides in the cytoplasm. The enzyme catalyses ATP + H2O + a folded polypeptide = ADP + phosphate + an unfolded polypeptide.. In terms of biological role, together with its co-chaperonin GroES, plays an essential role in assisting protein folding. The GroEL-GroES system forms a nano-cage that allows encapsulation of the non-native substrate proteins and provides a physical environment optimized to promote and accelerate protein folding. The protein is Chaperonin GroEL of Photorhabdus laumondii subsp. laumondii (strain DSM 15139 / CIP 105565 / TT01) (Photorhabdus luminescens subsp. laumondii).